The following is a 228-amino-acid chain: MAKQALQVAIDGPASAGKSTVAKLVAKRFGYIYVDTGAMYRAVTYWAMQQHVDLADEAAVITAMKSLKISFKPGEPDQLVFANQEDITAAIRQPDVTNNVSTIAALPQVRTILTEQQREMANAGGIVMDGRDIGTTVLPNAEVKIFLVASAAERAKRRYAENVKKGIDTPLAQLQAEIELRDHKDSTRKVSPLTQATDATLVDTTPMSIDEVVAAIAKIITKKQSSTI.

12 to 20 (GPASAGKST) lines the ATP pocket.

It belongs to the cytidylate kinase family. Type 1 subfamily.

Its subcellular location is the cytoplasm. It catalyses the reaction CMP + ATP = CDP + ADP. The enzyme catalyses dCMP + ATP = dCDP + ADP. This is Cytidylate kinase from Lactiplantibacillus plantarum (strain ATCC BAA-793 / NCIMB 8826 / WCFS1) (Lactobacillus plantarum).